Consider the following 151-residue polypeptide: Deoxyuridine 5'-triphosphate nucleotidohydrolase (151 aa).

Substrate is bound by residues 70–72 (RSG), asparagine 83, 87–89 (LID), and methionine 97.

This sequence belongs to the dUTPase family. The cofactor is Mg(2+).

It catalyses the reaction dUTP + H2O = dUMP + diphosphate + H(+). The protein operates within pyrimidine metabolism; dUMP biosynthesis; dUMP from dCTP (dUTP route): step 2/2. Its function is as follows. This enzyme is involved in nucleotide metabolism: it produces dUMP, the immediate precursor of thymidine nucleotides and it decreases the intracellular concentration of dUTP so that uracil cannot be incorporated into DNA. This Pseudomonas syringae pv. tomato (strain ATCC BAA-871 / DC3000) protein is Deoxyuridine 5'-triphosphate nucleotidohydrolase.